The chain runs to 239 residues: Probable transcriptional regulatory protein Ajs_1898 (239 aa).

Residues 1–21 (MAGHSKWANIQHRKGRQDEKR) form a disordered region.

It belongs to the TACO1 family.

It is found in the cytoplasm. This is Probable transcriptional regulatory protein Ajs_1898 from Acidovorax sp. (strain JS42).